Here is a 292-residue protein sequence, read N- to C-terminus: Syntenin-2 (292 aa).

2 PDZ domains span residues Glu108–Arg187 and Thr192–Val267.

As to quaternary structure, monomer and homodimer. Interacts with SDCBP. Interacts with TM4SF1.

The protein localises to the cytoplasm. It localises to the nucleus. Its subcellular location is the nucleolus. It is found in the nucleoplasm. The protein resides in the cell membrane. The protein localises to the nucleus speckle. Its function is as follows. Binds phosphatidylinositol 4,5-bisphosphate (PIP2). May play a role in the organization of nuclear PIP2, cell division and cell survival. The sequence is that of Syntenin-2 (Sdcbp2) from Mus musculus (Mouse).